The chain runs to 167 residues: MQYNGTARKVGDHIDTDAIIPARFLVTTDPAQLGANCMEGLEHGWVSRVQQGDIMVGGKNFGCGSSREHAPIAILGAGMPVVVAHSFARIFYRNGFNMGLILIEIGDDADRIHDGDVLSVDVENGRITNHTTGDVISCPPLPPFMHDILDKGGLVPYVRERLAAGDA.

Belongs to the LeuD family. LeuD type 2 subfamily. As to quaternary structure, heterodimer of LeuC and LeuD.

The enzyme catalyses (2R,3S)-3-isopropylmalate = (2S)-2-isopropylmalate. Its pathway is amino-acid biosynthesis; L-leucine biosynthesis; L-leucine from 3-methyl-2-oxobutanoate: step 2/4. Functionally, catalyzes the isomerization between 2-isopropylmalate and 3-isopropylmalate, via the formation of 2-isopropylmaleate. This chain is 3-isopropylmalate dehydratase small subunit, found in Oleidesulfovibrio alaskensis (strain ATCC BAA-1058 / DSM 17464 / G20) (Desulfovibrio alaskensis).